The chain runs to 347 residues: Melatonin receptor type 1B-B (347 aa).

Residues 1-36 (MPENIAFLTNSTDLGHVGRALGSSARPAWAIAVLAS) lie on the Extracellular side of the membrane. Residue Asn-10 is glycosylated (N-linked (GlcNAc...) asparagine). Residues 37–57 (VLIFTTVVDVLGNLLVIISVF) form a helical membrane-spanning segment. At 58-72 (RNRKLRNAGNVFVVS) the chain is on the cytoplasmic side. Residues 73-93 (LAFADLVVAFYPYPLVLYAIF) form a helical membrane-spanning segment. Topologically, residues 94–105 (HDGWSLGETQCK) are extracellular. An intrachain disulfide couples Cys-104 to Cys-181. A helical transmembrane segment spans residues 106–126 (ISGFLMGLSVIGSVFNITGIA). Residues 127-148 (INRYCYICHSFAYGRLYSFRNT) are Cytoplasmic-facing. A helical membrane pass occupies residues 149 to 169 (LLLVALIWALTVLAILPNFFV). The Extracellular segment spans residues 170 to 191 (GSLSYDPRVYSCTFTQTASSSY). The helical transmembrane segment at 192–212 (TVVVVVVHFLVPIAVVTFCYL) threads the bilayer. The Cytoplasmic segment spans residues 213–244 (RIWVLVIQVRRKVKSEERSRVRPSDLRNFVTM). The helical transmembrane segment at 245–265 (FVVFVLFAICWAPLNLIGLVV) threads the bilayer. The Extracellular portion of the chain corresponds to 266-278 (AINPEVMAPRVPE). A helical transmembrane segment spans residues 279-299 (WLFVVSYFMAYFNSCLNAIIY). Over 300–347 (GLLNRNFRKEYVRIMTAVWIPRRFVTETSRAATDGMRSKPSPAINNNE) the chain is Cytoplasmic.

The protein belongs to the G-protein coupled receptor 1 family.

The protein localises to the cell membrane. High affinity receptor for melatonin. The activity of this receptor is mediated by pertussis toxin sensitive G proteins that inhibits adenylate cyclase activity. The protein is Melatonin receptor type 1B-B (mtnr1bb) of Danio rerio (Zebrafish).